Reading from the N-terminus, the 613-residue chain is Laccase 1 (613 aa).

The signal sequence occupies residues 1-20; that stretch reads MSSSVRLLLIVALLYTNSWA. Plastocyanin-like domains are found at residues 29–142, 171–359, and 468–598; these read ITWE…IRPK, YLVV…MRVP, and DATC…ILDG. An N-linked (GlcNAc...) asparagine glycan is attached at N74. H78, H80, H122, and H124 together coordinate Cu cation. N-linked (GlcNAc...) asparagine glycosylation is found at N256, N279, and N484. The Cu cation site is built by H506, H509, and H511. The N-linked (GlcNAc...) asparagine glycan is linked to N526. Positions 580, 581, 582, and 586 each coordinate Cu cation.

It belongs to the multicopper oxidase family. Cu cation serves as cofactor.

Its subcellular location is the cell surface. It functions in the pathway pigment biosynthesis. Laccase; part of the Pks1 gene cluster that mediates the biosynthesis of an anthraquinone derivative pigment that contributes to conidial pigmentation that provides protection from UV radiation, heat and cold stress. The polyketide synthase Pks1 produces 1-acetyl-2,4,6,8-tetrahydroxy-9,10-anthraquinone though condensation of acetyl-CoA with malonyl-CoA. The dehydratase EthD and the laccase Mlac1 further convert the anthraquinone derivative into the final conidial pigment. The sequence is that of Laccase 1 from Metarhizium acridum (strain CQMa 102).